Here is a 318-residue protein sequence, read N- to C-terminus: tRNA pseudouridine synthase B (318 aa).

The Nucleophile role is filled by aspartate 47.

Belongs to the pseudouridine synthase TruB family. Type 1 subfamily.

The enzyme catalyses uridine(55) in tRNA = pseudouridine(55) in tRNA. In terms of biological role, responsible for synthesis of pseudouridine from uracil-55 in the psi GC loop of transfer RNAs. In Colwellia psychrerythraea (strain 34H / ATCC BAA-681) (Vibrio psychroerythus), this protein is tRNA pseudouridine synthase B.